Reading from the N-terminus, the 386-residue chain is Patatin-07 (386 aa).

Positions 1–23 (MATTKSFLILFFMILATTSSTCA) are cleaved as a signal peptide. The 198-residue stretch at 32 to 229 (LSIDGGGIKG…TVADPALLSV (198 aa)) folds into the PNPLA domain. The GXGXXG motif lies at 36–41 (GGGIKG). Residues 75–79 (GTSTG) carry the GXSXG motif. Serine 77 serves as the catalytic Nucleophile. N-linked (GlcNAc...) asparagine glycans are attached at residues asparagine 115 and asparagine 202. Aspartate 215 acts as the Proton acceptor in catalysis. The short motif at 215–217 (DGA) is the DGA/G element.

The protein belongs to the patatin family. As to expression, tuber.

The protein resides in the vacuole. Probable lipolytic acyl hydrolase (LAH), an activity which is thought to be involved in the response of tubers to pathogens. The chain is Patatin-07 from Solanum tuberosum (Potato).